Here is a 914-residue protein sequence, read N- to C-terminus: Effector protein hopAE1 (914 aa).

Polar residues predominate over residues 1–13; it reads MMPSQITRSSHSS. Residues 1 to 31 are disordered; that stretch reads MMPSQITRSSHSSLPEVAPASGDAAGVSEQT.

The protein belongs to the HopW family.

Its subcellular location is the secreted. This is Effector protein hopAE1 (hopAE1) from Pseudomonas syringae pv. syringae (strain B728a).